The sequence spans 688 residues: Methionine--tRNA ligase (688 aa).

A 'HIGH' region motif is present at residues 13–23; that stretch reads PYANGQIHIGH. Residues Cys144, Cys147, Cys157, and Cys160 each coordinate Zn(2+). A 'KMSKS' region motif is present at residues 335-339; it reads KMSKS. ATP is bound at residue Lys338. In terms of domain architecture, tRNA-binding spans 582-688; it reads DFAKIDLRVA…SGAVPGMRIG (107 aa).

Belongs to the class-I aminoacyl-tRNA synthetase family. MetG type 1 subfamily. In terms of assembly, homodimer. The cofactor is Zn(2+).

The protein localises to the cytoplasm. It catalyses the reaction tRNA(Met) + L-methionine + ATP = L-methionyl-tRNA(Met) + AMP + diphosphate. Its function is as follows. Is required not only for elongation of protein synthesis but also for the initiation of all mRNA translation through initiator tRNA(fMet) aminoacylation. The sequence is that of Methionine--tRNA ligase from Cupriavidus pinatubonensis (strain JMP 134 / LMG 1197) (Cupriavidus necator (strain JMP 134)).